The primary structure comprises 405 residues: S-adenosylmethionine synthase (405 aa).

141-146 (GQGSVD) contributes to the ATP binding site.

This sequence belongs to the AdoMet synthase 2 family. The cofactor is Mg(2+).

The catalysed reaction is L-methionine + ATP + H2O = S-adenosyl-L-methionine + phosphate + diphosphate. It functions in the pathway amino-acid biosynthesis; S-adenosyl-L-methionine biosynthesis; S-adenosyl-L-methionine from L-methionine: step 1/1. In terms of biological role, catalyzes the formation of S-adenosylmethionine from methionine and ATP. The polypeptide is S-adenosylmethionine synthase (Methanococcus maripaludis (Methanococcus deltae)).